Here is a 440-residue protein sequence, read N- to C-terminus: L-gulonolactone oxidase (440 aa).

The region spanning 17–187 (YGCCPEMYFQ…LTVTLQCVPQ (171 aa)) is the FAD-binding PCMH-type domain. His-54 is modified (pros-8alpha-FAD histidine). A helical membrane pass occupies residues 253–273 (FYLLEFLLWISTFLPGLVGWI).

Belongs to the oxygen-dependent FAD-linked oxidoreductase family. The cofactor is FAD.

The protein resides in the microsome membrane. It localises to the endoplasmic reticulum membrane. It catalyses the reaction L-gulono-1,4-lactone + O2 = L-ascorbate + H2O2 + H(+). Its pathway is cofactor biosynthesis; L-ascorbate biosynthesis via UDP-alpha-D-glucuronate pathway; L-ascorbate from UDP-alpha-D-glucuronate: step 4/4. Its function is as follows. Oxidizes L-gulono-1,4-lactone to hydrogen peroxide and L-xylo-hexulonolactone which spontaneously isomerizes to L-ascorbate. The protein is L-gulonolactone oxidase (GULO) of Bos taurus (Bovine).